We begin with the raw amino-acid sequence, 218 residues long: Cytochrome c biogenesis ATP-binding export protein CcmA (218 aa).

The region spanning 2–217 (LEAKNLTCIR…KSCLSACCAV (216 aa)) is the ABC transporter domain. 34–41 (GPNGAGKT) serves as a coordination point for ATP.

Belongs to the ABC transporter superfamily. CcmA exporter (TC 3.A.1.107) family. As to quaternary structure, the complex is composed of two ATP-binding proteins (CcmA) and two transmembrane proteins (CcmB).

The protein resides in the cell inner membrane. The enzyme catalyses heme b(in) + ATP + H2O = heme b(out) + ADP + phosphate + H(+). Part of the ABC transporter complex CcmAB involved in the biogenesis of c-type cytochromes; once thought to export heme, this seems not to be the case, but its exact role is uncertain. Responsible for energy coupling to the transport system. The polypeptide is Cytochrome c biogenesis ATP-binding export protein CcmA (Yersinia pseudotuberculosis serotype I (strain IP32953)).